The following is a 278-amino-acid chain: MDVRQSIHSAHAKTLDTQGLRNEFLVEEVFVADEYTMVYSHIDRIIVGGIMPITKTVSVGGEVGKQLGVSYFLERRELGVINIGGAGTITVDGQCYEIGHRDALYVGKGAKEVVFASIDTATPAKFYYNCAPAHTTYPTKKVTPDEVSPVTLGDNLTSNRRTINKYFVPDVLETCQLSMGLTELAPGNLWNTMPCHTHERRMEVYFYFNMDDDACVFHMMGQPQETRHIVMHNEQAVISPSWSIHSGVGTKAYTFIWGMVGENQVFDDMDHVAVKDLR.

Zn(2+) contacts are provided by H196, H198, E203, and H245.

It belongs to the KduI family. Homohexamer. Requires Zn(2+) as cofactor.

The catalysed reaction is 5-dehydro-4-deoxy-D-glucuronate = 3-deoxy-D-glycero-2,5-hexodiulosonate. It participates in glycan metabolism; pectin degradation; 2-dehydro-3-deoxy-D-gluconate from pectin: step 4/5. Functionally, catalyzes the isomerization of 5-dehydro-4-deoxy-D-glucuronate to 3-deoxy-D-glycero-2,5-hexodiulosonate. This chain is 4-deoxy-L-threo-5-hexosulose-uronate ketol-isomerase, found in Escherichia coli (strain 55989 / EAEC).